We begin with the raw amino-acid sequence, 1896 residues long: Trinucleotide repeat-containing gene 6A protein (1896 aa).

2 stretches are compositionally biased toward basic and acidic residues: residues 1 to 21 and 39 to 57; these read MREL…RDLV and KKKE…KVPE. 4 disordered regions span residues 1-137, 159-209, 222-250, and 257-276; these read MREL…LLKR, SESS…DCST, EAWP…SESE, and ASGN…GLGS. An interaction with argonaute family proteins region spans residues 1–917; it reads MRELEAKATK…GDPPKCNQSL (917 aa). Composition is skewed to low complexity over residues 69 to 93 and 101 to 113; these read ANSD…ASNQ and QQPQ…QQPQ. Over residues 125-137 the composition is skewed to basic residues; that stretch reads RFRHQEHKQLLKR. The tract at residues 239 to 488 is sufficient for interaction with AGO1, AGO3 and AGO4; it reads IDADSASNSE…QAPSVMNGTS (250 aa). Sufficient for interaction with AGO2 stretches follow at residues 255–331, 303–384, 325–424, 394–480, and 487–736; these read VMAS…NAWG, GALI…STIG, NRMN…KVSF, SKVS…QIQA, and TSLS…NGTE. 2 stretches are compositionally biased toward polar residues: residues 396 to 410 and 417 to 429; these read VSGS…SLQE and SGTQ…GQPQ. Disordered stretches follow at residues 396-461, 548-683, 703-998, 1011-1126, and 1143-1182; these read VSGS…NELP, FQVN…RRKI, LSNS…DPSK, IPEA…PTGW, and QELN…NKQE. Low complexity predominate over residues 430 to 443; sequence NITTETTGPNNTTN. The span at 444 to 461 shows a compositional bias: polar residues; it reads FMTSSLPNSGSVQNNELP. A sufficient for interaction with AGO1 and AGO4 region spans residues 551 to 1279; it reads NTNKGGGVWE…MFGVGNTAAQ (729 aa). Residues 573 to 584 show a composition bias toward gly residues; it reads SGNGANSGGSRR. Polar residues-rich tracts occupy residues 591 to 617 and 635 to 647; these read QNTG…SANG and GSAT…QNSV. A compositionally biased stretch (basic and acidic residues) spans 665-683; that stretch reads GRLEEKVTGESQSRDRRKI. Positions 703 to 722 are enriched in polar residues; it reads LSNSGWGQTPIKQNTAWDTE. Residues 723–733 are compositionally biased toward basic and acidic residues; the sequence is TSPRGERKTDN. Residue serine 724 is modified to Phosphoserine. A compositionally biased stretch (polar residues) spans 738–766; the sequence is WGSSATQTFNSGACTDKTSPNSNDTSSVS. Low complexity predominate over residues 858 to 871; it reads SSSGGSDSDRSISG. Phosphoserine is present on serine 863. Polar residues-rich tracts occupy residues 876–906 and 924–937; these read GKTS…SSQG and KPVS…QQDI. Residue serine 976 is modified to Phosphoserine. 3 stretches are compositionally biased toward polar residues: residues 1033 to 1042, 1054 to 1064, and 1082 to 1105; these read AVSSKETSSG, TPATTVDNGTS, and AASN…SGPK. The segment at 1059 to 1129 is sufficient for interaction with AGO2; that stretch reads VDNGTSAWGK…GSRPTGWEEE (71 aa). Residues 1143 to 1163 are compositionally biased toward low complexity; it reads QELNSSLNWPPYTKKMSSKGL. A phosphoserine mark is found at serine 1197 and serine 1255. Disordered stretches follow at residues 1234–1256, 1273–1306, and 1360–1395; these read GDYN…ESSM, VGNT…PPPL, and QRAQ…QSRQ. 2 stretches are compositionally biased toward low complexity: residues 1284–1296 and 1360–1376; these read QQPP…SSQP and QRAQ…RQQQ. Phosphothreonine is present on threonine 1406. Disordered regions lie at residues 1512 to 1570 and 1659 to 1685; these read MNSS…VTPG and PKNI…WDNS. A Phosphoserine modification is found at serine 1520. The interval 1605 to 1896 is sufficient for interaction with AGO2; that stretch reads TSAWSSIRAS…DHLGGGGESM (292 aa). The RRM domain maps to 1716–1788; sequence NWLVLKNLTP…TTILAEFASE (73 aa). Phosphoserine occurs at positions 1804 and 1825.

The protein belongs to the GW182 family. As to quaternary structure, interacts with AGO2. Interacts with AGO1, AGO3 and AGO4. Interacts with CNOT1; the interaction is direct and mediates the association with the CCR4-NOT complex. Interacts with ZC3H12A. Interacts with SND1. Interacts with GARRE1.

Its subcellular location is the cytoplasm. It localises to the P-body. Plays a role in RNA-mediated gene silencing by both micro-RNAs (miRNAs) and short interfering RNAs (siRNAs). Required for miRNA-dependent repression of translation and for siRNA-dependent endonucleolytic cleavage of complementary mRNAs by argonaute family proteins. As a scaffolding protein, associates with argonaute proteins bound to partially complementary mRNAs, and can simultaneously recruit CCR4-NOT and PAN deadenylase complexes. The chain is Trinucleotide repeat-containing gene 6A protein (Tnrc6a) from Mus musculus (Mouse).